We begin with the raw amino-acid sequence, 740 residues long: ATP-dependent zinc metalloprotease YME1L (740 aa).

Over 1 to 256 (MFSTTTHSVP…KSGKTMKYLK (256 aa)) the chain is Mitochondrial matrix. The helical transmembrane segment at 257 to 277 (TLQTIVVIVVFLGIFLSFFTT) threads the bilayer. Residues 278 to 740 (SNGSVFRSIQ…IKAILNESQT (463 aa)) are Mitochondrial intermembrane-facing. 347 to 351 (GTGKT) lines the ATP pocket. Residue His-563 coordinates Zn(2+). Glu-564 is an active-site residue. His-567 and Asp-641 together coordinate Zn(2+).

This sequence in the N-terminal section; belongs to the AAA ATPase family. It in the C-terminal section; belongs to the peptidase M41 family. Zn(2+) serves as cofactor.

The protein localises to the mitochondrion inner membrane. Its function is as follows. ATP-dependent metalloprotease that catalyzes the degradation of folded and unfolded proteins with a suitable degron sequence in the mitochondrial intermembrane region. Plays an important role in regulating mitochondrial morphology and function by cleaving Opa1, giving rise to a form of Opa1 that promotes maintenance of normal mitochondrial structure and mitochondrial protein metabolism. Ensures cell proliferation, maintains normal cristae morphology and complex I respiration activity, promotes antiapoptotic activity and protects mitochondria from the accumulation of oxidatively damaged membrane proteins. Required to control the accumulation of nonassembled respiratory chain subunits such as ND-30. The polypeptide is ATP-dependent zinc metalloprotease YME1L (Drosophila melanogaster (Fruit fly)).